Reading from the N-terminus, the 320-residue chain is Tyrosine phosphatase H3 (320 aa).

Positions 22–309 constitute a Tyrosine-protein phosphatase domain; it reads NFWEFVRLEH…AFCYKAVRYA (288 aa). Cys-250 serves as the catalytic Phosphocysteine intermediate.

This sequence belongs to the protein-tyrosine phosphatase family.

The catalysed reaction is O-phospho-L-tyrosyl-[protein] + H2O = L-tyrosyl-[protein] + phosphate. Functionally, suppresses host immune cell adhesion and phagocytosis. The polypeptide is Tyrosine phosphatase H3 (H3) (Microplitis demolitor (Parasitoid wasp)).